The primary structure comprises 709 residues: ATP-binding cassette sub-family F member 3 (709 aa).

Residue Ala-2 is modified to N-acetylalanine. The segment covering 129–143 (RLKAKQEKRSEKETL) has biased composition (basic and acidic residues). A disordered region spans residues 129-171 (RLKAKQEKRSEKETLKTSSPLVLEEASASQAGSRKESRLESSG). Residues Ser-155, Ser-157, and Ser-161 each carry the phosphoserine modification. Residues 161-171 (SRKESRLESSG) are compositionally biased toward basic and acidic residues. ABC transporter domains follow at residues 178-424 (VRIE…LNQQ) and 492-707 (LQLD…RREG). Position 210 to 217 (210 to 217 (GRNGLGKT)) interacts with ATP. Ser-283 carries the post-translational modification Phosphoserine. Residue 525–532 (GENGAGKS) coordinates ATP.

The protein belongs to the ABC transporter superfamily. ABCF family. EF3 subfamily.

Its function is as follows. Displays an antiviral effect against flaviviruses such as west Nile virus (WNV) in the presence of OAS1B. The protein is ATP-binding cassette sub-family F member 3 (Abcf3) of Rattus norvegicus (Rat).